We begin with the raw amino-acid sequence, 183 residues long: Peptidyl-tRNA hydrolase (183 aa).

Residue Y14 participates in tRNA binding. H19 acts as the Proton acceptor in catalysis. Residues Y64, N66, and N112 each contribute to the tRNA site.

It belongs to the PTH family. As to quaternary structure, monomer.

It is found in the cytoplasm. The catalysed reaction is an N-acyl-L-alpha-aminoacyl-tRNA + H2O = an N-acyl-L-amino acid + a tRNA + H(+). Functionally, hydrolyzes ribosome-free peptidyl-tRNAs (with 1 or more amino acids incorporated), which drop off the ribosome during protein synthesis, or as a result of ribosome stalling. In terms of biological role, catalyzes the release of premature peptidyl moieties from peptidyl-tRNA molecules trapped in stalled 50S ribosomal subunits, and thus maintains levels of free tRNAs and 50S ribosomes. The sequence is that of Peptidyl-tRNA hydrolase from Anaplasma phagocytophilum (strain HZ).